Reading from the N-terminus, the 334-residue chain is MGFHHVGQAGLELLTSGHPALERRPEYLEERRIKEIVKKHSQFIGYPITLFVEKKRNKQVSDAEAEKKEDKRKKKKESNDKPEIEDVGSDEEEEKKDADKKKKKSKEKYIDQELNKTKPIWTRNPDAITNEEYGEFHQSLTNNWEDHLAVKHFSVEGQLEELKDSRRVMKANQKHIYYITGETKDQVANSAFVECLQKHGLEVIYMIELIDKYCVQQLKELESKTVVSVAKEGLELPEDEEEKKKQEEKKTKFENLCKIMKDMLEKKVKKVVVSNCMEDPQRHTNKIYRMIKLGLGVDEYDPTANDINAAITKEMPPLRGGDDTSRMEEVGGSG.

The disordered stretch occupies residues 55-107 (KRNKQVSDAEAEKKEDKRKKKKESNDKPEIEDVGSDEEEEKKDADKKKKKSKE). Residues 59–69 (QVSDAEAEKKE) are compositionally biased toward basic and acidic residues. Positions 85 to 94 (EDVGSDEEEE) are enriched in acidic residues. Ser89 bears the Phosphoserine mark. Positions 234–267 (LELPEDEEEKKKQEEKKTKFENLCKIMKDMLEKK) form a coiled coil. Residues 314–334 (EMPPLRGGDDTSRMEEVGGSG) form a disordered region. The span at 320–334 (GGDDTSRMEEVGGSG) shows a compositional bias: basic and acidic residues. Residues 327 to 331 (MEEVG) carry the TPR repeat-binding motif.

The protein belongs to the heat shock protein 90 family. As to quaternary structure, homodimer.

Its subcellular location is the cytoplasm. Functionally, putative molecular chaperone that may promote the maturation, structural maintenance and proper regulation of specific target proteins. In Homo sapiens (Human), this protein is Putative heat shock protein HSP 90-alpha A5 (HSP90AA5P).